The chain runs to 466 residues: RUS family member 1 (466 aa).

Ala-2 carries the N-acetylalanine modification. Residues Leu-245–Leu-265 traverse the membrane as a helical segment.

Belongs to the RUS1 family.

Its subcellular location is the membrane. The sequence is that of RUS family member 1 (Rusf1) from Rattus norvegicus (Rat).